The sequence spans 115 residues: Large ribosomal subunit protein bL19 (115 aa).

It belongs to the bacterial ribosomal protein bL19 family.

In terms of biological role, this protein is located at the 30S-50S ribosomal subunit interface and may play a role in the structure and function of the aminoacyl-tRNA binding site. This chain is Large ribosomal subunit protein bL19, found in Streptococcus uberis (strain ATCC BAA-854 / 0140J).